Reading from the N-terminus, the 187-residue chain is 1,6-anhydro-N-acetylmuramyl-L-alanine amidase AmpD (187 aa).

Positions 29–167 (TLLVVHNISL…APERKTDPGP (139 aa)) constitute an N-acetylmuramoyl-L-alanine amidase domain. A Zn(2+)-binding site is contributed by His34. Catalysis depends on Glu116, which acts as the Proton acceptor. His154 and Asp164 together coordinate Zn(2+).

Belongs to the N-acetylmuramoyl-L-alanine amidase 2 family. It depends on Zn(2+) as a cofactor.

It is found in the cytoplasm. The catalysed reaction is Hydrolyzes the link between N-acetylmuramoyl residues and L-amino acid residues in certain cell-wall glycopeptides.. Functionally, involved in cell wall peptidoglycan recycling. Specifically cleaves the amide bond between the lactyl group of N-acetylmuramic acid and the alpha-amino group of the L-alanine in degradation products containing an anhydro N-acetylmuramyl moiety. The protein is 1,6-anhydro-N-acetylmuramyl-L-alanine amidase AmpD of Enterobacter cloacae.